The following is a 298-amino-acid chain: Probable tRNA(His) guanylyltransferase (298 aa).

Mg(2+)-binding residues include D58, G59, and D105. GTP is bound by residues 58–63 (DGRNFH) and 104–105 (SD).

It belongs to the tRNA(His) guanylyltransferase family. In terms of assembly, homotetramer. Interacts with MFN1 and MFN2; functions as a guanyl-nucleotide exchange factor/GEF for MFN2 and also probably MFN1. Mg(2+) serves as cofactor.

The protein resides in the cytoplasm. Its subcellular location is the mitochondrion. The catalysed reaction is a 5'-end ribonucleotide-tRNA(His) + GTP + ATP + H2O = a 5'-end phospho-guanosine-ribonucleotide-tRNA(His) + AMP + 2 diphosphate + H(+). In terms of biological role, adds a GMP to the 5'-end of tRNA(His) after transcription and RNase P cleavage. This step is essential for proper recognition of the tRNA and for the fidelity of protein synthesis. Also functions as a guanyl-nucleotide exchange factor/GEF for the MFN1 and MFN2 mitofusins thereby regulating mitochondrial fusion. By regulating both mitochondrial dynamics and bioenergetic function, it contributes to cell survival following oxidative stress. The polypeptide is Probable tRNA(His) guanylyltransferase (THG1L) (Bos taurus (Bovine)).